The sequence spans 192 residues: NOP protein chaperone 1 (192 aa).

The span at 1-26 shows a compositional bias: low complexity; it reads MEVSGESHSGPSCSSSSRDGSGVSVS. The disordered stretch occupies residues 1 to 39; sequence MEVSGESHSGPSCSSSSRDGSGVSVSKELLMAGSGGRGG. Phosphoserine is present on residues S34 and S66. The segment at 118-192 is disordered; it reads FEMNQSHSKE…SENKEKQENK (75 aa). Residues 129 to 152 are compositionally biased toward acidic residues; it reads DSSEENSQDSSEESSESEDEDDST. Residues 164–177 are compositionally biased toward basic and acidic residues; that stretch reads KLPHSEDGKGKIEV. S180 carries the phosphoserine modification.

Interacts with NOP58, RUVBL1 and RUVBL2; the interactions are direct and NOPCHAP1 bridges the association of NOP58 with RUVBL1:RUVBL2 even in absence of snoRNAs. The interactions with RUVBL1 and RUVBL2 are disrupted upon ATP binding.

It is found in the nucleus. Its function is as follows. Client-loading PAQosome/R2TP complex cofactor that selects NOP58 to promote box C/D small nucleolar ribonucleoprotein (snoRNP) assembly. Acts as a bridge between NOP58 and the R2TP complex via RUVBL1:RUVBL2. The polypeptide is NOP protein chaperone 1 (NOPCHAP1) (Bos taurus (Bovine)).